A 779-amino-acid chain; its full sequence is DNA topoisomerase 1 (779 aa).

The Toprim domain occupies Met1–Val111. Mg(2+) contacts are provided by Glu7 and Asp80. One can recognise a Topo IA-type catalytic domain in the interval Asp132 to Glu568. Residues Ser166–Gln171 form an interaction with DNA region. Residue Tyr304 is the O-(5'-phospho-DNA)-tyrosine intermediate of the active site. A C4-type zinc finger spans residues Cys600 to Cys627.

Belongs to the type IA topoisomerase family. As to quaternary structure, monomer. It depends on Mg(2+) as a cofactor.

The enzyme catalyses ATP-independent breakage of single-stranded DNA, followed by passage and rejoining.. In terms of biological role, releases the supercoiling and torsional tension of DNA, which is introduced during the DNA replication and transcription, by transiently cleaving and rejoining one strand of the DNA duplex. Introduces a single-strand break via transesterification at a target site in duplex DNA. The scissile phosphodiester is attacked by the catalytic tyrosine of the enzyme, resulting in the formation of a DNA-(5'-phosphotyrosyl)-enzyme intermediate and the expulsion of a 3'-OH DNA strand. The free DNA strand then undergoes passage around the unbroken strand, thus removing DNA supercoils. Finally, in the religation step, the DNA 3'-OH attacks the covalent intermediate to expel the active-site tyrosine and restore the DNA phosphodiester backbone. This Rickettsia typhi (strain ATCC VR-144 / Wilmington) protein is DNA topoisomerase 1.